Here is a 596-residue protein sequence, read N- to C-terminus: Elongation factor 4 (596 aa).

The tr-type G domain occupies 2 to 184 (KHIRNFSIIA…VIVEQIPPPE (183 aa)). Residues 14–19 (DHGKST) and 131–134 (NKID) contribute to the GTP site.

The protein belongs to the TRAFAC class translation factor GTPase superfamily. Classic translation factor GTPase family. LepA subfamily.

The protein localises to the cell inner membrane. It carries out the reaction GTP + H2O = GDP + phosphate + H(+). Required for accurate and efficient protein synthesis under certain stress conditions. May act as a fidelity factor of the translation reaction, by catalyzing a one-codon backward translocation of tRNAs on improperly translocated ribosomes. Back-translocation proceeds from a post-translocation (POST) complex to a pre-translocation (PRE) complex, thus giving elongation factor G a second chance to translocate the tRNAs correctly. Binds to ribosomes in a GTP-dependent manner. The polypeptide is Elongation factor 4 (Shewanella oneidensis (strain ATCC 700550 / JCM 31522 / CIP 106686 / LMG 19005 / NCIMB 14063 / MR-1)).